Consider the following 500-residue polypeptide: MVNKSRMMPAVLAVAVVVAFLTTGCIRWSTQSRPVVNGPAAAEFAVALRNRVSTDAMMAHLSKLQDIANANDGTRAVGTPGYQASVDYVVNTLRNSGFDVQTPEFSARVFKAEKGVVTLGGNTVEARALEYSLGTPPDGVTGPLVAAPADDSPGCSPSDYDRLPVSGAVVLVDRGVCPFAQKEDAAAQRGAVALIIADNIDEQAMGGTLGANTDVKIPVVSVTKSVGFQLRGQSGPTTVKLTASTQSFKARNVIAQTKTGSSANVVMAGAHLDSVPEGPGINDNGSGVAAVLETAVQLGNSPHVSNAVRFAFWGAEEFGLIGSRNYVESLDIDALKGIALYLNFDMLASPNPGYFTYDGDQSLPLDARGQPVVPEGSAGIERTFVAYLKMAGKTAQDTSFDGRSDYDGFTLAGIPSGGLFSGAEVKKSAEQAELWGGTADEPFDPNYHQKTDTLDHIDRTALGINGAGVAYAVGLYAQDLGGPNGVPVMADRTRHLIAKP.

A signal peptide spans 1–24; it reads MVNKSRMMPAVLAVAVVVAFLTTG. The N-palmitoyl cysteine moiety is linked to residue Cys25. The S-diacylglycerol cysteine moiety is linked to residue Cys25. The 92-residue stretch at 140–231 folds into the PA domain; sequence VTGPLVAAPA…VTKSVGFQLR (92 aa). Zn(2+)-binding residues include His271 and Asp283. Glu316 (proton acceptor) is an active-site residue. Residues Glu317, Asp345, and His448 each coordinate Zn(2+).

The protein belongs to the peptidase M28 family. M28A subfamily. The cofactor is Zn(2+). Modified by Lgt on Cys-25 with an S-linked diacylglycerol with a mixture of C16 and C19 fatty acids (palmitic and tuberculostearic acid), signal peptide is removed by LspA, modified by Lnt with an amide-linked mixture of C16 and C19 fatty acids, expressed in M.bovis.

It localises to the cell membrane. It catalyses the reaction Release of an N-terminal amino acid, Xaa-|-Yaa-, in which Xaa is preferably Leu, but may be other amino acids including Pro although not Arg or Lys, and Yaa may be Pro. Amino acid amides and methyl esters are also readily hydrolyzed, but rates on arylamides are exceedingly low.. Its function is as follows. An aminopeptidase; acts on free N-terminal amino groups with a very strong preference for Leu in the first position. This is Probable lipoprotein aminopeptidase LpqL (lpqL) from Mycobacterium tuberculosis (strain ATCC 25618 / H37Rv).